A 513-amino-acid chain; its full sequence is Putative ribose/galactose/methyl galactoside import ATP-binding protein 3 (513 aa).

ABC transporter domains follow at residues 15–252 (IELT…VGRQ) and 263–508 (TSAN…TQRE). 47 to 54 (GENGAGKS) serves as a coordination point for ATP.

This sequence belongs to the ABC transporter superfamily. Carbohydrate importer 2 (CUT2) (TC 3.A.1.2) family.

It localises to the cell inner membrane. The enzyme catalyses D-ribose(out) + ATP + H2O = D-ribose(in) + ADP + phosphate + H(+). The catalysed reaction is D-galactose(out) + ATP + H2O = D-galactose(in) + ADP + phosphate + H(+). Its function is as follows. Part of an ABC transporter complex involved in carbohydrate import. Could be involved in ribose, galactose and/or methyl galactoside import. Responsible for energy coupling to the transport system. This Burkholderia ambifaria (strain ATCC BAA-244 / DSM 16087 / CCUG 44356 / LMG 19182 / AMMD) (Burkholderia cepacia (strain AMMD)) protein is Putative ribose/galactose/methyl galactoside import ATP-binding protein 3.